A 357-amino-acid chain; its full sequence is S-adenosyl-L-methionine:benzoic acid/salicylic acid carboxyl methyltransferase 1 (357 aa).

Tyr-18 is a binding site for S-adenosyl-L-homocysteine. Benzoate is bound at residue Gln-25. Positions 59, 64, 96, 97, 135, and 136 each coordinate S-adenosyl-L-homocysteine. Position 157 (Trp-157) interacts with benzoate. Asn-168, Asp-254, Phe-256, and Asn-257 together coordinate Mg(2+). Gln-260 is a binding site for benzoate.

This sequence belongs to the methyltransferase superfamily. Type-7 methyltransferase family. As to expression, predominantly expressed in petal limbs and tubes of corollas.

The catalysed reaction is benzoate + S-adenosyl-L-methionine = methyl benzoate + S-adenosyl-L-homocysteine. The enzyme catalyses salicylate + S-adenosyl-L-methionine = methyl salicylate + S-adenosyl-L-homocysteine. It participates in aromatic compound metabolism. Functionally, converts benzoic acid into the volatile ester methyl benzoates. This scent, mostly produced in a rhythmical, diurnal manner, attracts the pollinators. This Petunia hybrida (Petunia) protein is S-adenosyl-L-methionine:benzoic acid/salicylic acid carboxyl methyltransferase 1.